The sequence spans 1264 residues: uncharacterized protein (1264 aa).

The N-terminal stretch at 1-18 (MMRKYLILLILLPALAVG) is a signal peptide. A helical membrane pass occupies residues 1215–1235 (SYTVLGVVVITILTMSIILCL).

The protein resides in the host membrane. This is an uncharacterized protein from Ostreid herpesvirus 1 (isolate France) (OsHV-1).